Reading from the N-terminus, the 60-residue chain is Large ribosomal subunit protein bL33 (60 aa).

It belongs to the bacterial ribosomal protein bL33 family.

The chain is Large ribosomal subunit protein bL33 from Cytophaga hutchinsonii (strain ATCC 33406 / DSM 1761 / CIP 103989 / NBRC 15051 / NCIMB 9469 / D465).